We begin with the raw amino-acid sequence, 155 residues long: Peptide methionine sulfoxide reductase MsrB (155 aa).

One can recognise a MsrB domain in the interval 15–137; the sequence is REALIATLNA…NSVSLTFIPT (123 aa). C54, C57, C103, and C106 together coordinate Zn(2+). The active-site Nucleophile is C126.

The protein belongs to the MsrB Met sulfoxide reductase family. It depends on Zn(2+) as a cofactor.

The enzyme catalyses L-methionyl-[protein] + [thioredoxin]-disulfide + H2O = L-methionyl-(R)-S-oxide-[protein] + [thioredoxin]-dithiol. This Xylella fastidiosa (strain 9a5c) protein is Peptide methionine sulfoxide reductase MsrB.